The chain runs to 306 residues: tRNA dimethylallyltransferase (306 aa).

11 to 18 lines the ATP pocket; that stretch reads APTAAGKT. 13 to 18 is a substrate binding site; the sequence is TAAGKT.

The protein belongs to the IPP transferase family. As to quaternary structure, monomer. The cofactor is Mg(2+).

It carries out the reaction adenosine(37) in tRNA + dimethylallyl diphosphate = N(6)-dimethylallyladenosine(37) in tRNA + diphosphate. In terms of biological role, catalyzes the transfer of a dimethylallyl group onto the adenine at position 37 in tRNAs that read codons beginning with uridine, leading to the formation of N6-(dimethylallyl)adenosine (i(6)A). This is tRNA dimethylallyltransferase from Deinococcus radiodurans (strain ATCC 13939 / DSM 20539 / JCM 16871 / CCUG 27074 / LMG 4051 / NBRC 15346 / NCIMB 9279 / VKM B-1422 / R1).